A 261-amino-acid polypeptide reads, in one-letter code: tRNA pseudouridine synthase A (261 aa).

The Nucleophile role is filled by Asp52. Position 110 (Tyr110) interacts with substrate.

This sequence belongs to the tRNA pseudouridine synthase TruA family. As to quaternary structure, homodimer.

The catalysed reaction is uridine(38/39/40) in tRNA = pseudouridine(38/39/40) in tRNA. Its function is as follows. Formation of pseudouridine at positions 38, 39 and 40 in the anticodon stem and loop of transfer RNAs. The chain is tRNA pseudouridine synthase A from Blochmanniella pennsylvanica (strain BPEN).